The following is a 429-amino-acid chain: Tol-Pal system protein TolB (429 aa).

The first 28 residues, 1 to 28, serve as a signal peptide directing secretion; the sequence is MSITPSFSRRSVVSLLAAGAFSSMSAFA.

The protein belongs to the TolB family. In terms of assembly, the Tol-Pal system is composed of five core proteins: the inner membrane proteins TolA, TolQ and TolR, the periplasmic protein TolB and the outer membrane protein Pal. They form a network linking the inner and outer membranes and the peptidoglycan layer.

The protein resides in the periplasm. Part of the Tol-Pal system, which plays a role in outer membrane invagination during cell division and is important for maintaining outer membrane integrity. This chain is Tol-Pal system protein TolB, found in Polaromonas naphthalenivorans (strain CJ2).